The following is a 330-amino-acid chain: Phospholipase C (330 aa).

An N-terminal signal peptide occupies residues 1–34; that stretch reads MVKKTKSNSLKKVATLALANLLLVGALTDNSAKA. An intrachain disulfide couples Cys155 to Cys191.

It belongs to the neutral sphingomyelinase family. Monomer.

The protein resides in the secreted. It catalyses the reaction a 1,2-diacyl-sn-glycero-3-phosphocholine + H2O = phosphocholine + a 1,2-diacyl-sn-glycerol + H(+). In terms of biological role, bacterial hemolysins are exotoxins that attack blood cell membranes and cause cell rupture. Beta-hemolysin is a phospholipase C with specific activity toward sphingomyelins. Has a high specificity for sphingomyelin, hydrolyzes lysophosphatidylcholine at a much lower rate, but has no activity towards phosphatidylcholine, phosphatidylethanolamine, or phosphatidylserine. This Staphylococcus aureus (strain NCTC 8325 / PS 47) protein is Phospholipase C (hlb).